The primary structure comprises 59 residues: Insulin (59 aa).

Intrachain disulfides connect Cys-7–Cys-45, Cys-19–Cys-58, and Cys-44–Cys-49.

The protein belongs to the insulin family. Heterodimer of a B chain and an A chain linked by two disulfide bonds.

Its subcellular location is the secreted. In terms of biological role, insulin decreases blood glucose concentration. It increases cell permeability to monosaccharides, amino acids and fatty acids. It accelerates glycolysis, the pentose phosphate cycle, and glycogen synthesis in liver. The polypeptide is Insulin (ins) (Chimaera monstrosa (Rabbit fish)).